A 211-amino-acid chain; its full sequence is 1-deoxy-D-xylulose 5-phosphate reductoisomerase (211 aa).

Aspartate 14 contacts Mn(2+). Residues serine 15, glutamate 16, serine 40, histidine 63, serine 76, asparagine 81, lysine 82, and glutamate 85 each coordinate 1-deoxy-D-xylulose 5-phosphate. Residue glutamate 16 coordinates Mn(2+). Residue glutamate 85 participates in Mn(2+) binding.

This sequence belongs to the DXR family. Mn(2+) serves as cofactor. It depends on Mg(2+) as a cofactor. Mostly expressed in flowers and, to a lower extent, in leaves.

The protein resides in the plastid. It localises to the chloroplast stroma. The enzyme catalyses 2-C-methyl-D-erythritol 4-phosphate + NADP(+) = 1-deoxy-D-xylulose 5-phosphate + NADPH + H(+). The protein operates within isoprenoid biosynthesis; isopentenyl diphosphate biosynthesis via DXP pathway; isopentenyl diphosphate from 1-deoxy-D-xylulose 5-phosphate: step 1/6. In terms of biological role, enzyme of the plastid non-mevalonate pathway for isoprenoid biosynthesis that catalyzes the NADPH-dependent rearrangement and reduction of 1-deoxy-D-xylulose-5-phosphate (DXP) to 2-C-methyl-D-erythritol 4-phosphate (MEP). Required for chloroplast development. In Thymus vulgaris (Thyme), this protein is 1-deoxy-D-xylulose 5-phosphate reductoisomerase.